The primary structure comprises 925 residues: Glutamate receptor 3.1 (925 aa).

The first 25 residues, 1–25 (MLSSMNWVLLSFIIVLGGGLLLSEG), serve as a signal peptide directing secretion. Residues 26–591 (ASSSRPPVIK…NPWAFLRPFT (566 aa)) are Extracellular-facing. N-linked (GlcNAc...) asparagine glycosylation is found at N309, N341, N359, N419, N437, and N488. The helical transmembrane segment at 592-612 (LPMWAVTASFFVIVGAAIWIL) threads the bilayer. The Cytoplasmic portion of the chain corresponds to 613–621 (EHRINDEFR). A helical membrane pass occupies residues 622-642 (GPPRRQIITILWFTFSTMFFS). Residues 643–653 (HRETTVSTLGR) are Cytoplasmic-facing. A helical membrane pass occupies residues 654–674 (MVLLIWLFVVLIITSSYTASL). Residues 675 to 831 (TSILTVQQLN…GDSEQLNVHS (157 aa)) are Extracellular-facing. Residues N738 and N812 are each glycosylated (N-linked (GlcNAc...) asparagine). A helical membrane pass occupies residues 832–852 (FWGMFLVVGIACLVALFIHFF). At 853-925 (KIIRDFCKDT…ISRTASRRPI (73 aa)) the chain is on the cytoplasmic side. The segment at 897–925 (KRRLKRKRNNDHSMNANSIISRTASRRPI) is disordered. Over residues 908 to 919 (HSMNANSIISRT) the composition is skewed to polar residues.

This sequence belongs to the glutamate-gated ion channel (TC 1.A.10.1) family. In terms of assembly, may form heteromers. Expressed predominantly in roots. Firt detected in the vascular tissues of the cotyledons, and later in the vasculature of all organs. In leaves, preferentially expressed in guard cells.

It localises to the membrane. In terms of biological role, glutamate-gated receptor that probably acts as a non-selective cation channel. May be involved in light-signal transduction and calcium homeostasis via the regulation of calcium influx into cells. Required for the long-term calcium oscillation-regulated stomatal movements. In Arabidopsis thaliana (Mouse-ear cress), this protein is Glutamate receptor 3.1 (GLR3.1).